A 185-amino-acid polypeptide reads, in one-letter code: ATP synthase subunit delta, chloroplastic (185 aa).

It belongs to the ATPase delta chain family. F-type ATPases have 2 components, F(1) - the catalytic core - and F(0) - the membrane proton channel. F(1) has five subunits: alpha(3), beta(3), gamma(1), delta(1), epsilon(1). CF(0) has four main subunits: a(1), b(1), b'(1) and c(10-14). The alpha and beta chains form an alternating ring which encloses part of the gamma chain. F(1) is attached to F(0) by a central stalk formed by the gamma and epsilon chains, while a peripheral stalk is formed by the delta, b and b' chains.

The protein resides in the plastid. Its subcellular location is the chloroplast thylakoid membrane. Its function is as follows. F(1)F(0) ATP synthase produces ATP from ADP in the presence of a proton or sodium gradient. F-type ATPases consist of two structural domains, F(1) containing the extramembraneous catalytic core and F(0) containing the membrane proton channel, linked together by a central stalk and a peripheral stalk. During catalysis, ATP synthesis in the catalytic domain of F(1) is coupled via a rotary mechanism of the central stalk subunits to proton translocation. This protein is part of the stalk that links CF(0) to CF(1). It either transmits conformational changes from CF(0) to CF(1) or is implicated in proton conduction. This is ATP synthase subunit delta, chloroplastic from Gracilaria tenuistipitata var. liui (Red alga).